A 299-amino-acid chain; its full sequence is 4-diphosphocytidyl-2-C-methyl-D-erythritol kinase (299 aa).

The active site involves Lys-17. Pro-99 to Ser-109 contacts ATP. Residue Asp-142 is part of the active site.

Belongs to the GHMP kinase family. IspE subfamily.

It catalyses the reaction 4-CDP-2-C-methyl-D-erythritol + ATP = 4-CDP-2-C-methyl-D-erythritol 2-phosphate + ADP + H(+). It functions in the pathway isoprenoid biosynthesis; isopentenyl diphosphate biosynthesis via DXP pathway; isopentenyl diphosphate from 1-deoxy-D-xylulose 5-phosphate: step 3/6. In terms of biological role, catalyzes the phosphorylation of the position 2 hydroxy group of 4-diphosphocytidyl-2C-methyl-D-erythritol. The chain is 4-diphosphocytidyl-2-C-methyl-D-erythritol kinase from Deinococcus radiodurans (strain ATCC 13939 / DSM 20539 / JCM 16871 / CCUG 27074 / LMG 4051 / NBRC 15346 / NCIMB 9279 / VKM B-1422 / R1).